We begin with the raw amino-acid sequence, 232 residues long: Large ribosomal subunit protein uL1 (232 aa).

Belongs to the universal ribosomal protein uL1 family. As to quaternary structure, part of the 50S ribosomal subunit.

Binds directly to 23S rRNA. The L1 stalk is quite mobile in the ribosome, and is involved in E site tRNA release. Its function is as follows. Protein L1 is also a translational repressor protein, it controls the translation of the L11 operon by binding to its mRNA. The polypeptide is Large ribosomal subunit protein uL1 (Christiangramia forsetii (strain DSM 17595 / CGMCC 1.15422 / KT0803) (Gramella forsetii)).